The primary structure comprises 264 residues: Splicing factor U2af 38 kDa subunit (264 aa).

Residues 12 to 40 form a C3H1-type 1 zinc finger; sequence EKDKVNCSFYFKIGACRHGDRCSRIHNKP. Residue serine 19 is modified to Phosphoserine. One can recognise an RRM domain in the interval 44–149; it reads QTVLLQNLYV…RPVYSELSPV (106 aa). Residues 151-178 form a C3H1-type 2 zinc finger; sequence DFREACCRQYEMGECTRSGFCNFMHLKP. Basic residues predominate over residues 190-219; the sequence is RRRRARSRSRSPGRRRGSRSRSRSPGRRGG. Positions 190 to 264 are disordered; sequence RRRRARSRSR…GGGGGGGGRY (75 aa). Over residues 233-251 the composition is skewed to basic and acidic residues; that stretch reads NERDNMRGNDRGNDRDRRK. Positions 253–264 are enriched in gly residues; it reads GGGGGGGGGGRY.

Belongs to the splicing factor SR family. In terms of assembly, associates with a 65 kDa protein.

The protein resides in the nucleus. In terms of biological role, necessary for the splicing of pre-mRNA. Binds to the polypyrimidine tract of introns early during spliceosome assembly. The sequence is that of Splicing factor U2af 38 kDa subunit (U2af38) from Drosophila melanogaster (Fruit fly).